The sequence spans 979 residues: Putative transcription initiation factor TFIID 111 kDa subunit (979 aa).

A Phosphoserine modification is found at S244.

TFIID is composed of TATA binding protein (TBP) and a number of TBP-associated factors (TAFs).

It localises to the nucleus. Functionally, TAFs are components of the transcription factor IID (TFIID) complex that are essential for mediating regulation of RNA polymerase transcription. The polypeptide is Putative transcription initiation factor TFIID 111 kDa subunit (Schizosaccharomyces pombe (strain 972 / ATCC 24843) (Fission yeast)).